A 131-amino-acid chain; its full sequence is Small ribosomal subunit protein uS8 (131 aa).

Belongs to the universal ribosomal protein uS8 family. In terms of assembly, part of the 30S ribosomal subunit. Contacts proteins S5 and S12.

Functionally, one of the primary rRNA binding proteins, it binds directly to 16S rRNA central domain where it helps coordinate assembly of the platform of the 30S subunit. In Helicobacter pylori (strain P12), this protein is Small ribosomal subunit protein uS8.